The primary structure comprises 358 residues: Histidinol-phosphate aminotransferase (358 aa).

Lys-217 is modified (N6-(pyridoxal phosphate)lysine).

The protein belongs to the class-II pyridoxal-phosphate-dependent aminotransferase family. Histidinol-phosphate aminotransferase subfamily. As to quaternary structure, homodimer. Pyridoxal 5'-phosphate serves as cofactor.

The catalysed reaction is L-histidinol phosphate + 2-oxoglutarate = 3-(imidazol-4-yl)-2-oxopropyl phosphate + L-glutamate. It functions in the pathway amino-acid biosynthesis; L-histidine biosynthesis; L-histidine from 5-phospho-alpha-D-ribose 1-diphosphate: step 7/9. In Ruminiclostridium cellulolyticum (strain ATCC 35319 / DSM 5812 / JCM 6584 / H10) (Clostridium cellulolyticum), this protein is Histidinol-phosphate aminotransferase.